Here is a 403-residue protein sequence, read N- to C-terminus: CCA-adding enzyme (403 aa).

2 residues coordinate ATP: glycine 32 and arginine 35. Glycine 32 and arginine 35 together coordinate CTP. The Mg(2+) site is built by aspartate 45 and aspartate 47. 5 residues coordinate ATP: arginine 116, aspartate 159, arginine 162, arginine 165, and arginine 168. Residues arginine 116, aspartate 159, arginine 162, arginine 165, and arginine 168 each contribute to the CTP site.

The protein belongs to the tRNA nucleotidyltransferase/poly(A) polymerase family. Bacterial CCA-adding enzyme type 3 subfamily. In terms of assembly, homodimer. It depends on Mg(2+) as a cofactor.

The catalysed reaction is a tRNA precursor + 2 CTP + ATP = a tRNA with a 3' CCA end + 3 diphosphate. It catalyses the reaction a tRNA with a 3' CCA end + 2 CTP + ATP = a tRNA with a 3' CCACCA end + 3 diphosphate. Catalyzes the addition and repair of the essential 3'-terminal CCA sequence in tRNAs without using a nucleic acid template. Adds these three nucleotides in the order of C, C, and A to the tRNA nucleotide-73, using CTP and ATP as substrates and producing inorganic pyrophosphate. tRNA 3'-terminal CCA addition is required both for tRNA processing and repair. Also involved in tRNA surveillance by mediating tandem CCA addition to generate a CCACCA at the 3' terminus of unstable tRNAs. While stable tRNAs receive only 3'-terminal CCA, unstable tRNAs are marked with CCACCA and rapidly degraded. In Leuconostoc citreum (strain KM20), this protein is CCA-adding enzyme.